Reading from the N-terminus, the 143-residue chain is Midkine (143 aa).

A signal peptide spans 1–20 (MQHRGFLLLTLLALLALTSA). 5 cysteine pairs are disulfide-bonded: C37–C61, C45–C70, C52–C74, C84–C116, and C94–C126.

This sequence belongs to the pleiotrophin family. In terms of assembly, homodimer. Interacts with ALK. Interacts with LRP1; promotes neuronal survival. Interacts with LRP2. Interacts with NCAM1. Interacts (via C-terminal) with PTPRZ1 (via chondroitin sulfate chains); this interaction is inhibited by PTN; this interaction promotes neuronal migration. Interacts with NCL; this interaction promotes NCL clustering and lateral movements of this complex into lipid rafts leading to MDK internalization. Interacts with LRP6 and LRP8: this interaction is calcium dependent. Interacts with ITGA4. Interacts with ITGA6. Interacts with ITGB1. Interacts with ITGA4:ITGB1 complex; this interaction mediates MDK-induced osteoblast cells migration through PXN phosphorylation. Interacts with ITGA6:ITGB1 complex; this interaction mediates MDK-induced neurite outgrowth. Interacts with NOTCH2; this interaction mediates a nuclear accumulation of NOTCH2 and therefore activation of NOTCH2 signaling leading to interaction between HES1 and STAT3. Interacts with GPC2 (via heparan sulfate chain); this interaction is inhibited by heparin followed by chondroitin sulfate E; this interaction induces GPC2 clustering through heparan sulfate chain; this interaction induces neuronal cell adhesion and neurite outgrowth. Interacts with SDC3; this interaction induces SDC3 clustering; this interaction induces neuronal cell adhesion and neurite outgrowth. Interacts with SDC1. Interacts with CSPG5; this interaction promotes elongation of oligodendroglial precursor-like cells. In terms of tissue distribution, expressed in various tumor cell lines. In insulinoma tissue predominantly expressed in precancerous lesions.

The protein localises to the secreted. In terms of biological role, secreted protein that functions as a cytokine and growth factor and mediates its signal through cell-surface proteoglycan and non-proteoglycan receptors. Binds cell-surface proteoglycan receptors via their chondroitin sulfate (CS) groups. Thereby regulates many processes like inflammatory response, cell proliferation, cell adhesion, cell growth, cell survival, tissue regeneration, cell differentiation and cell migration. Participates in inflammatory processes by exerting two different activities. Firstly, mediates neutrophils and macrophages recruitment to the sites of inflammation both by direct action by cooperating namely with ITGB2 via LRP1 and by inducing chemokine expression. This inflammation can be accompanied by epithelial cell survival and smooth muscle cell migration after renal and vessel damage, respectively. Secondly, suppresses the development of tolerogenic dendric cells thereby inhibiting the differentiation of regulatory T cells and also promote T cell expansion through NFAT signaling and Th1 cell differentiation. Promotes tissue regeneration after injury or trauma. After heart damage negatively regulates the recruitment of inflammatory cells and mediates cell survival through activation of anti-apoptotic signaling pathways via MAPKs and AKT pathways through the activation of angiogenesis. Also facilitates liver regeneration as well as bone repair by recruiting macrophage at trauma site and by promoting cartilage development by facilitating chondrocyte differentiation. Plays a role in brain by promoting neural precursor cells survival and growth through interaction with heparan sulfate proteoglycans. Binds PTPRZ1 and promotes neuronal migration and embryonic neurons survival. Binds SDC3 or GPC2 and mediates neurite outgrowth and cell adhesion. Binds chondroitin sulfate E and heparin leading to inhibition of neuronal cell adhesion induced by binding with GPC2. Binds CSPG5 and promotes elongation of oligodendroglial precursor-like cells. Also binds ITGA6:ITGB1 complex; this interaction mediates MDK-induced neurite outgrowth. Binds LRP1; promotes neuronal survival. Binds ITGA4:ITGB1 complex; this interaction mediates MDK-induced osteoblast cells migration through PXN phosphorylation. Binds anaplastic lymphoma kinase (ALK) which induces ALK activation and subsequent phosphorylation of the insulin receptor substrate (IRS1), followed by the activation of mitogen-activated protein kinase (MAPK) and PI3-kinase, and the induction of cell proliferation. Promotes epithelial to mesenchymal transition through interaction with NOTCH2. During arteriogenesis, plays a role in vascular endothelial cell proliferation by inducing VEGFA expression and release which in turn induces nitric oxide synthase expression. Moreover activates vasodilation through nitric oxide synthase activation. Negatively regulates bone formation in response to mechanical load by inhibiting Wnt/beta-catenin signaling in osteoblasts. In addition plays a role in hippocampal development, working memory, auditory response, early fetal adrenal gland development and the female reproductive system. The polypeptide is Midkine (Homo sapiens (Human)).